The sequence spans 395 residues: Beta-1,4-galactosyltransferase 3 (395 aa).

At 1 to 10 (MLRRLLERPC) the chain is on the cytoplasmic side. Residues 11-31 (TLALLVGSQLAVMMYLSLGGF) form a helical; Signal-anchor for type II membrane protein membrane-spanning segment. Residues 32-395 (RSLSALFGRD…ANHTAPRGSH (364 aa)) lie on the Lumenal side of the membrane. Asn-57 carries N-linked (GlcNAc...) asparagine glycosylation. A disulfide bridge connects residues Cys-79 and Cys-121. A UDP-alpha-D-galactose-binding site is contributed by 132–136 (PHRAR). N-linked (GlcNAc...) asparagine glycosylation is present at Asn-168. UDP-alpha-D-galactose-binding positions include 171–173 (FNR), 198–199 (VD), Tyr-228, and Trp-260. A disulfide bond links Cys-192 and Cys-211. Asp-199 serves as a coordination point for Mn(2+). 262–265 (GEDD) is a binding site for N-acetyl-D-glucosamine. Position 293 (His-293) interacts with Mn(2+). 293–295 (HRG) provides a ligand contact to UDP-alpha-D-galactose. Arg-305 is an N-acetyl-D-glucosamine binding site. Asn-339 carries N-linked (GlcNAc...) asparagine glycosylation. The tract at residues 340 to 395 (ITADIGTDPRGPRSPSGPRYPPGSSQAFRQEMLQRRPPARPGPLPTANHTAPRGSH) is disordered. Low complexity predominate over residues 352–364 (RSPSGPRYPPGSS). Asn-387 carries N-linked (GlcNAc...) asparagine glycosylation.

It belongs to the glycosyltransferase 7 family. Mn(2+) serves as cofactor.

Its subcellular location is the golgi apparatus. It is found in the golgi stack membrane. The enzyme catalyses an N-acetyl-beta-D-glucosaminyl derivative + UDP-alpha-D-galactose = a beta-D-galactosyl-(1-&gt;4)-N-acetyl-beta-D-glucosaminyl derivative + UDP + H(+). It carries out the reaction N-acetyl-D-glucosamine + UDP-alpha-D-galactose = beta-D-galactosyl-(1-&gt;4)-N-acetyl-D-glucosamine + UDP + H(+). The catalysed reaction is a beta-D-GlcNAc-(1-&gt;3)-beta-D-Gal-(1-&gt;4)-beta-D-Glc-(1&lt;-&gt;1)-Cer(d18:1(4E)) + UDP-alpha-D-galactose = a neolactoside nLc4Cer(d18:1(4E)) + UDP + H(+). It catalyses the reaction a beta-D-glucosylceramide + UDP-alpha-D-galactose = a beta-D-galactosyl-(1-&gt;4)-beta-D-glucosyl-(1&lt;-&gt;1)-ceramide + UDP + H(+). The enzyme catalyses a neolactoside IV(3)-beta-GlcNAc-nLc4Cer + UDP-alpha-D-galactose = a neolactoside nLc6Cer + UDP + H(+). The protein operates within protein modification; protein glycosylation. Its function is as follows. Responsible for the synthesis of complex-type N-linked oligosaccharides in many glycoproteins as well as the carbohydrate moieties of glycolipids. The protein is Beta-1,4-galactosyltransferase 3 of Mus musculus (Mouse).